A 107-amino-acid polypeptide reads, in one-letter code: MMTTAKTFAEFKTLTDTEDYLQFFGIAYDQGFVNVNRLHILKQFSKLIEEVDAAFPTLSETEKLEKYGQAFEEAYELFKTSSPLETKLFKVFQEKPKDVVFLKDLTK.

Belongs to the NifW family. As to quaternary structure, homotrimer; associates with NifD.

In terms of biological role, may protect the nitrogenase Fe-Mo protein from oxidative damage. The sequence is that of Nitrogenase-stabilizing/protective protein NifW from Gloeothece citriformis (strain PCC 7424) (Cyanothece sp. (strain PCC 7424)).